We begin with the raw amino-acid sequence, 197 residues long: uncharacterized protein (197 aa).

The signal sequence occupies residues 1-30; that stretch reads MSTYIIINIALLIAIVALIFFLSKKTKSEA.

This is an uncharacterized protein from Acanthamoeba polyphaga (Amoeba).